The primary structure comprises 410 residues: Probable 2,3-bisphosphoglycerate-independent phosphoglycerate mutase (410 aa).

The protein belongs to the BPG-independent phosphoglycerate mutase family. A-PGAM subfamily.

It catalyses the reaction (2R)-2-phosphoglycerate = (2R)-3-phosphoglycerate. Its pathway is carbohydrate degradation; glycolysis; pyruvate from D-glyceraldehyde 3-phosphate: step 3/5. Catalyzes the interconversion of 2-phosphoglycerate and 3-phosphoglycerate. The chain is Probable 2,3-bisphosphoglycerate-independent phosphoglycerate mutase from Deinococcus radiodurans (strain ATCC 13939 / DSM 20539 / JCM 16871 / CCUG 27074 / LMG 4051 / NBRC 15346 / NCIMB 9279 / VKM B-1422 / R1).